The chain runs to 253 residues: Anamorsin homolog (253 aa).

An N-terminal SAM-like domain region spans residues 4 to 129; that stretch reads FKGLQKSLYI…ETGSSARLSF (126 aa). A linker region spans residues 130 to 161; it reads AKKNSSTLNVWKISGDDDELIDEEDLLDEVDK. C172, C181, C184, and C186 together coordinate [2Fe-2S] cluster. The tract at residues 172-186 is fe-S binding site A; the sequence is CSTTGKRKACKNCSC. The [4Fe-4S] cluster site is built by C214, C217, C225, and C228. 2 short sequence motifs (cx2C motif) span residues 214-217 and 225-228; these read CGNC and CSSC. The tract at residues 214 to 228 is fe-S binding site B; it reads CGNCYLGDAFRCSSC.

It belongs to the anamorsin family. In terms of assembly, monomer. [2Fe-2S] cluster is required as a cofactor. The cofactor is [4Fe-4S] cluster.

It is found in the cytoplasm. Its subcellular location is the mitochondrion intermembrane space. Its function is as follows. Component of the cytosolic iron-sulfur (Fe-S) protein assembly (CIA) machinery. Required for the maturation of extramitochondrial Fe-S proteins. Part of an electron transfer chain functioning in an early step of cytosolic Fe-S biogenesis, facilitating the de novo assembly of a [4Fe-4S] cluster on the cytosolic Fe-S scaffold complex. Electrons are transferred from NADPH via a FAD- and FMN-containing diflavin oxidoreductase. Together with the diflavin oxidoreductase, also required for the assembly of the diferric tyrosyl radical cofactor of ribonucleotide reductase (RNR), probably by providing electrons for reduction during radical cofactor maturation in the catalytic small subunit. The sequence is that of Anamorsin homolog from Drosophila willistoni (Fruit fly).